A 426-amino-acid chain; its full sequence is Methionine aminopeptidase 2 (426 aa).

Residues 1 to 72 are disordered; sequence MTSATTTEAT…QEQTNPPTVG (72 aa). A compositionally biased stretch (basic and acidic residues) spans 10-34; sequence TAKDLQEKLSLKENDVVEDDGKVEE. Basic residues predominate over residues 47 to 60; sequence KKKKKKKKSSKKKK. Histidine 179 lines the substrate pocket. Aspartate 199, aspartate 210, and histidine 279 together coordinate a divalent metal cation. Histidine 287 contributes to the substrate binding site. The a divalent metal cation site is built by glutamate 312 and glutamate 407.

Belongs to the peptidase M24A family. Methionine aminopeptidase eukaryotic type 2 subfamily. The cofactor is Co(2+). Zn(2+) is required as a cofactor. It depends on Mn(2+) as a cofactor. Fe(2+) serves as cofactor.

Its subcellular location is the cytoplasm. It catalyses the reaction Release of N-terminal amino acids, preferentially methionine, from peptides and arylamides.. In terms of biological role, cotranslationally removes the N-terminal methionine from nascent proteins. The N-terminal methionine is often cleaved when the second residue in the primary sequence is small and uncharged (Met-Ala-, Cys, Gly, Pro, Ser, Thr, or Val). The polypeptide is Methionine aminopeptidase 2 (fma2) (Schizosaccharomyces pombe (strain 972 / ATCC 24843) (Fission yeast)).